A 168-amino-acid polypeptide reads, in one-letter code: Transcription antitermination protein NusB (168 aa).

Belongs to the NusB family.

Functionally, involved in transcription antitermination. Required for transcription of ribosomal RNA (rRNA) genes. Binds specifically to the boxA antiterminator sequence of the ribosomal RNA (rrn) operons. This is Transcription antitermination protein NusB from Chlamydia trachomatis serovar L2 (strain ATCC VR-902B / DSM 19102 / 434/Bu).